The sequence spans 245 residues: Ribosomal RNA small subunit methyltransferase G (245 aa).

S-adenosyl-L-methionine contacts are provided by residues Gly90, Leu95, 140-141 (AE), and Arg158. Positions 223 to 245 (VVSARRAKPPHPKSARTGKAGTR) are disordered. A compositionally biased stretch (basic residues) spans 227 to 245 (RRAKPPHPKSARTGKAGTR).

The protein belongs to the methyltransferase superfamily. RNA methyltransferase RsmG family.

It is found in the cytoplasm. Functionally, specifically methylates the N7 position of guanine in position 518 of 16S rRNA. The polypeptide is Ribosomal RNA small subunit methyltransferase G (Mycobacterium avium (strain 104)).